The sequence spans 20 residues: Short cationic peptide-6a (20 aa).

The residue at position 20 (serine 20) is a Serine amide.

As to expression, expressed by the venom gland.

The protein resides in the secreted. This chain is Short cationic peptide-6a, found in Cupiennius salei (American wandering spider).